Reading from the N-terminus, the 377-residue chain is Membrane protein MLC1 (377 aa).

A compositionally biased stretch (basic and acidic residues) spans 1–23 (MTQEPFREELAYDRMPTLERGRQ). The disordered stretch occupies residues 1-36 (MTQEPFREELAYDRMPTLERGRQDPASYAPDAKPSD). 4 helical membrane passes run 52-72 (WVFSVLMGSCLLVTSGFSLYL), 82-100 (YLRCAAGSCIPSAIVSFTV), 111-131 (FQILFVSTFAVTTTCLIWFGC), and 144-164 (FNLILLLLLELLMAATVIIAA). Phosphoserine occurs at positions 177 and 179. Helical transmembrane passes span 199-219 (SVVEVIAGISAVLGGIIALNV), 230-250 (VTFFWILVACFPSAIASHVAA), 257-277 (LVEVLIAISSLTSPLLFTASG), and 304-324 (LLLLLLLVLLLQAGLNTGTAI).

As to quaternary structure, interacts with ATP1B1. Part of a complex containing ATP1B1, TRPV4, AQP4 and HEPACAM. In terms of tissue distribution, expressed in the brain, with highest levels found in the amygdala, nucleus caudatus, thalamus and hippocampus.

It is found in the membrane. Its subcellular location is the cell membrane. The protein resides in the cytoplasm. It localises to the perinuclear region. The protein localises to the endoplasmic reticulum. Functionally, transmembrane protein mainly expressed in brain astrocytes that may play a role in transport across the blood-brain and brain-cerebrospinal fluid barriers. Regulates the response of astrocytes to hypo-osmosis by promoting calcium influx. May function as regulatory protein of membrane protein complexes such as ion channels. This is Membrane protein MLC1 from Homo sapiens (Human).